A 187-amino-acid chain; its full sequence is UPF0340 protein SP_0663 (187 aa).

This sequence belongs to the UPF0340 family.

This is UPF0340 protein SP_0663 from Streptococcus pneumoniae serotype 4 (strain ATCC BAA-334 / TIGR4).